Reading from the N-terminus, the 354-residue chain is MAELKNDRYLRALLKQPVDVTPVWMMRQAGRYLPEYRATRAQAGDFMSLCKNAELACEVTLQPLRRYELDAAILFSDILTIPDAMGLGLYFEAGEGPRFERKADTLEAIKALPIPDPEDELGYVMRAVSTIRRELKGEVPLIGFSGSPWTLATYMVEGGSSKAFEKIKRMMYSEPMALHLLLDKLADSVILYLNAQIANGAQSVMIFDSWGGALSHSAYREFSLRYMQKIVDGLTREADGRKVPVTLFTKGGGLWLESMAETGCDALGLDWTVDIADARRRVGHKVALQGNMDPSMLYAPIPRIEEEVEQILAGFGEGTGHVFNLGHGIHQHVDPEHAGAFIKAVHEKSRKYHK.

Substrate contacts are provided by residues 27 to 31, aspartate 77, tyrosine 154, serine 209, and histidine 327; that span reads RQAGR.

It belongs to the uroporphyrinogen decarboxylase family. In terms of assembly, homodimer.

The protein resides in the cytoplasm. It catalyses the reaction uroporphyrinogen III + 4 H(+) = coproporphyrinogen III + 4 CO2. It participates in porphyrin-containing compound metabolism; protoporphyrin-IX biosynthesis; coproporphyrinogen-III from 5-aminolevulinate: step 4/4. In terms of biological role, catalyzes the decarboxylation of four acetate groups of uroporphyrinogen-III to yield coproporphyrinogen-III. This Shewanella amazonensis (strain ATCC BAA-1098 / SB2B) protein is Uroporphyrinogen decarboxylase.